Reading from the N-terminus, the 199-residue chain is Ribosome biogenesis protein RLP24 (199 aa).

A disordered region spans residues 147-182; it reads KEQERAESVSEQEESEEEEEDMEIDSDEEEEEQLEK. A compositionally biased stretch (acidic residues) spans 156 to 179; it reads SEQEESEEEEEDMEIDSDEEEEEQ. Residue S172 is modified to Phosphoserine.

It belongs to the eukaryotic ribosomal protein eL24 family. Associated with nucleolar and cytoplasmic pre-60S particles. At the end of biogenesis it dissociates from cytoplasmic pre-60S particles and is likely to be exchanged for its ribosomal homolog, RPL24. Interacts (via C-terminus) with AFG2 (hexameric form); the interaction is direct, recruits AFG2 to pre-60S ribosomal particles and promotes AFG2 ATPase activity and RLP24 release from pre-60S ribosomal particles. Interacts with NOG1; the interaction is direct.

It is found in the cytoplasm. The protein resides in the nucleus. Functionally, involved in the biogenesis of the 60S ribosomal subunit. Ensures the docking of NOG1 to pre-60S ribosomal particles. Activates and recruits ATPase AFG2 to cytoplasmic pre-60S ribosomal particles. This is Ribosome biogenesis protein RLP24 (RLP24) from Saccharomyces cerevisiae (strain ATCC 204508 / S288c) (Baker's yeast).